We begin with the raw amino-acid sequence, 850 residues long: Bifunctional levopimaradiene synthase, chloroplastic (850 aa).

The N-terminal 52 residues, 1–52, are a transit peptide targeting the chloroplast; that stretch reads MALPSSSLSSQIHTGATTQCIPHFHGSLNAGTSAGKRRSLYLRWGKGPSKIV. Lys250 lines the substrate pocket. Residues Asp383 and Asp385 each coordinate Mg(2+). The short motif at 383–386 is the DXDD motif element; it reads DIDD. Residue Lys470 coordinates substrate. Residues Asp602, Asp606, Asn746, Thr750, and Glu754 each coordinate Mg(2+). The DDXXD motif motif lies at 602 to 606; sequence DDLYD.

It belongs to the terpene synthase family. Tpsd subfamily. Mg(2+) is required as a cofactor. As to expression, expressed in young tissues such as flushing buds and green bark tissues. Lower levels in mature needles and bark.

The protein resides in the plastid. Its subcellular location is the chloroplast. It carries out the reaction (2E,6E,10E)-geranylgeranyl diphosphate = (+)-copalyl diphosphate. It catalyses the reaction (+)-copalyl diphosphate = abieta-8(14),12-diene + diphosphate. The enzyme catalyses (+)-copalyl diphosphate = neoabietadiene + diphosphate. It participates in terpene metabolism; oleoresin biosynthesis. Involved in defensive oleoresin formation in conifers in response to insect attack or other injury. Involved in diterpene (C20) olefins biosynthesis. Bifunctional enzyme that catalyzes two sequential cyclizations of geranylgeranyl diphosphate (GGPP) to levopimaradiene. Levopimaradiene is the major products of the enzyme followed by abietadiene, neoabietadiene and palustradiene. No activity with geranyl diphosphate (GPP) or farnesyl diphosphate (FPP) as substrate. This chain is Bifunctional levopimaradiene synthase, chloroplastic (LPS), found in Pinus taeda (Loblolly pine).